Reading from the N-terminus, the 474-residue chain is MTKKLHIKTWGCQMNEYDSSKMADLLDSTHGYQLTDNPEEADVLLLNTCSIREKAQEKVFHQLGRWHMLKEARPELIIGVGGCVASQEGAHIRERANYVDIIFGPQTLHRLPEMINHVNGTRSPVVDISFPEIEKFDRLPEPRAEGPTAFVSIMEGCNKYCSFCVVPYTRGEEVSRPCDDILFEIAQLADQGVREVNLLGQNVNAYRGASYDGGICTFAELLRLVAAIDGIDRIRYITSHPIEFTDDIIDVYRDTPELVSFVHLPVQSGSDRILTMMKRAHTALEYKSIIRRLRKARPDIQISSDFIIGFPGETQQDFEQTMQLIADVNFDMSFSFIYSARPGTPAADMVDNVSEEEKKQRLHILQERITQQAMQYSRRMKGKVQRILVEGTSRKNVMELSGRTENNRVVNFEGAPSMIGKFVDVEIVDVYPNSLRGVLLRTEDQMTLRSHESTASVIARTRKENELGVGMYQP.

The region spanning 3-120 (KKLHIKTWGC…LPEMINHVNG (118 aa)) is the MTTase N-terminal domain. [4Fe-4S] cluster contacts are provided by cysteine 12, cysteine 49, cysteine 83, cysteine 157, cysteine 161, and cysteine 164. Positions 143–375 (RAEGPTAFVS…QERITQQAMQ (233 aa)) constitute a Radical SAM core domain. Residues 378–441 (RRMKGKVQRI…PNSLRGVLLR (64 aa)) form the TRAM domain.

It belongs to the methylthiotransferase family. MiaB subfamily. In terms of assembly, monomer. It depends on [4Fe-4S] cluster as a cofactor.

It is found in the cytoplasm. The enzyme catalyses N(6)-dimethylallyladenosine(37) in tRNA + (sulfur carrier)-SH + AH2 + 2 S-adenosyl-L-methionine = 2-methylsulfanyl-N(6)-dimethylallyladenosine(37) in tRNA + (sulfur carrier)-H + 5'-deoxyadenosine + L-methionine + A + S-adenosyl-L-homocysteine + 2 H(+). In terms of biological role, catalyzes the methylthiolation of N6-(dimethylallyl)adenosine (i(6)A), leading to the formation of 2-methylthio-N6-(dimethylallyl)adenosine (ms(2)i(6)A) at position 37 in tRNAs that read codons beginning with uridine. The chain is tRNA-2-methylthio-N(6)-dimethylallyladenosine synthase from Sodalis glossinidius (strain morsitans).